We begin with the raw amino-acid sequence, 735 residues long: Receptor-type guanylate cyclase gcy-27 (735 aa).

Asparagine 11 carries an N-linked (GlcNAc...) asparagine glycan. The helical transmembrane segment at 28 to 48 threads the bilayer; the sequence is FIICTLPVPIYFVVVAIWTIN. Positions 188–465 constitute a Protein kinase domain; it reads ALTSRRRVFG…IENLRNAIAI (278 aa). The Guanylate cyclase domain maps to 538–668; sequence TVMFVQICDF…DTVNFASRMQ (131 aa).

Belongs to the adenylyl cyclase class-4/guanylyl cyclase family. In terms of tissue distribution, expressed bilaterally in ASK, ASI and ASJ sensory neurons.

Its subcellular location is the cell membrane. The catalysed reaction is GTP = 3',5'-cyclic GMP + diphosphate. Guanylate cyclase involved in the production of the second messenger cGMP. May be involved in sensitivity to quinine by regulating egl-4 activity through the production of cGMP. Promotes the calcium flux to the cytoplasm in ASJ sensory neurons upon removal of a nitric oxide (NO) stimulus and is thereby involved in the behavioral avoidance response to NO-producing organisms like P.aeruginosa. This chain is Receptor-type guanylate cyclase gcy-27, found in Caenorhabditis elegans.